Reading from the N-terminus, the 309-residue chain is Ribose-phosphate pyrophosphokinase (309 aa).

ATP is bound by residues 37 to 39 (DGE) and 96 to 97 (RQ). Positions 130 and 169 each coordinate Mg(2+). Residue Lys-192 is part of the active site. Residues Arg-194, Asp-218, and 222-226 (DTAGT) each bind D-ribose 5-phosphate.

It belongs to the ribose-phosphate pyrophosphokinase family. Class I subfamily. In terms of assembly, homohexamer. The cofactor is Mg(2+).

It localises to the cytoplasm. It carries out the reaction D-ribose 5-phosphate + ATP = 5-phospho-alpha-D-ribose 1-diphosphate + AMP + H(+). The protein operates within metabolic intermediate biosynthesis; 5-phospho-alpha-D-ribose 1-diphosphate biosynthesis; 5-phospho-alpha-D-ribose 1-diphosphate from D-ribose 5-phosphate (route I): step 1/1. Functionally, involved in the biosynthesis of the central metabolite phospho-alpha-D-ribosyl-1-pyrophosphate (PRPP) via the transfer of pyrophosphoryl group from ATP to 1-hydroxyl of ribose-5-phosphate (Rib-5-P). The sequence is that of Ribose-phosphate pyrophosphokinase from Helicobacter hepaticus (strain ATCC 51449 / 3B1).